An 88-amino-acid chain; its full sequence is Class II hydrophobin 1 (88 aa).

A signal peptide spans M1–A15. 4 cysteine pairs are disulfide-bonded: C19/C69, C29/C59, C30/C42, and C70/C81.

Belongs to the cerato-ulmin hydrophobin family. In terms of assembly, homodimer. Homodimers further self-assemble to form highly ordered films at water-air interfaces through intermolecular interactions.

Its subcellular location is the secreted. It is found in the cell wall. Its function is as follows. Aerial growth, conidiation, and dispersal of filamentous fungi in the environment rely upon a capability of their secreting small amphipathic proteins called hydrophobins (HPBs) with low sequence identity. Class I can self-assemble into an outermost layer of rodlet bundles on aerial cell surfaces, conferring cellular hydrophobicity that supports fungal growth, development and dispersal; whereas Class II form highly ordered films at water-air interfaces through intermolecular interactions but contribute nothing to the rodlet structure. In Trichoderma asperellum (strain ATCC 204424 / CBS 433.97 / NBRC 101777), this protein is Class II hydrophobin 1.